A 125-amino-acid chain; its full sequence is Antitoxin MazE5 (125 aa).

As to quaternary structure, forms a complex with cognate toxin MazF5.

Functionally, antitoxin component of a type II toxin-antitoxin (TA) system. Upon expression in M.smegmatis neutralizes the effect of cognate toxin MazF5. The protein is Antitoxin MazE5 (mazE5) of Mycobacterium tuberculosis (strain ATCC 25618 / H37Rv).